The primary structure comprises 405 residues: Scarecrow-like protein 23 (405 aa).

The disordered stretch occupies residues 1-20; the sequence is MTTKRIDRDLPSSDDPSSAK. The GRAS domain occupies 31-400; it reads ENDGAAAIKL…LSLLTASAWK (370 aa). The segment at 38–102 is leucine repeat I (LRI); the sequence is IKLLSLLLQC…ISSYLSGACS (65 aa). Residues 45-49 carry the LxCxE motif motif; sequence LQCAE. The VHIID stretch occupies residues 121 to 186; the sequence is LQTYNSVSPL…RKLRSIRITG (66 aa). The VHIID signature appears at 152–156; it reads VHIID. Residues 196-228 are leucine repeat II (LRII); the sequence is STGRRLADFASSLNLPFEFHPIEGIIGNLIDPS. The tract at residues 238-327 is PFYRE; the sequence is VVVHWMQHRL…QIVLGTEIRN (90 aa). An SAW region spans residues 330 to 400; that stretch reads AHGGGRRKRM…LSLLTASAWK (71 aa).

It belongs to the GRAS family. In terms of assembly, interacts with SHR. Expressed in seedlings, cotyledons, shoot apex, leaves and flowers.

The protein resides in the nucleus. In terms of biological role, probable transcription factor involved in plant development. The polypeptide is Scarecrow-like protein 23 (SCL23) (Arabidopsis thaliana (Mouse-ear cress)).